The following is a 378-amino-acid chain: Glutamate 5-kinase (378 aa).

Residue Lys-15 coordinates ATP. Substrate contacts are provided by Ser-56, Asp-143, and Asn-155. Residue 175-176 (SD) coordinates ATP. Residues 281–358 (KGTLTIDAGA…PDVAVILGIS (78 aa)) form the PUA domain.

This sequence belongs to the glutamate 5-kinase family.

Its subcellular location is the cytoplasm. It carries out the reaction L-glutamate + ATP = L-glutamyl 5-phosphate + ADP. It participates in amino-acid biosynthesis; L-proline biosynthesis; L-glutamate 5-semialdehyde from L-glutamate: step 1/2. Functionally, catalyzes the transfer of a phosphate group to glutamate to form L-glutamate 5-phosphate. The polypeptide is Glutamate 5-kinase (Bradyrhizobium sp. (strain BTAi1 / ATCC BAA-1182)).